The primary structure comprises 520 residues: Maturase K (520 aa).

Belongs to the intron maturase 2 family. MatK subfamily.

It is found in the plastid. It localises to the chloroplast. Usually encoded in the trnK tRNA gene intron. Probably assists in splicing its own and other chloroplast group II introns. This Iris cristata (Dwarf crested iris) protein is Maturase K.